Consider the following 940-residue polypeptide: Leucine--tRNA ligase, mitochondrial (940 aa).

The 'HIGH' region signature appears at proline 54–histidine 64. A 'KMSKS' region motif is present at residues threonine 638–leucine 642. Lysine 641 lines the ATP pocket. The tract at residues lysine 724–asparagine 744 is disordered.

It belongs to the class-I aminoacyl-tRNA synthetase family.

The protein resides in the mitochondrion. The enzyme catalyses tRNA(Leu) + L-leucine + ATP = L-leucyl-tRNA(Leu) + AMP + diphosphate. The protein is Leucine--tRNA ligase, mitochondrial (mleuS) of Dictyostelium discoideum (Social amoeba).